We begin with the raw amino-acid sequence, 289 residues long: MIKNYKLLLFTTFTLFFITFVSGSSILKANFYYKVDWENVQCFVPPCPKYTIQKLNTNEKSQKILDFIFPNGLNKTTLLGDESKTLIVLGTTQPSSKFPNNATDFLVTRVYKSLPLGNKQTSTDKYYMFGDNGTRCKTSPCPNIVAALLNVHSQEIINTISQPYEKNVGFLDSVWLSSKNIRSDDFGLIGQGTIKNGVISISNSFIYLPDPPIKCPELPLLKCVEGNSMTYSRDENRCLVSPRCTKFGVCTLSIPLCNKGYRLVSFPSTELNGCPKFFCDPEFVNKTHK.

A signal peptide spans Met1–Gly23. 4 N-linked (GlcNAc...) asparagine glycosylation sites follow: Asn74, Asn101, Asn132, and Asn285.

Its subcellular location is the secreted. This is an uncharacterized protein from Dictyostelium discoideum (Social amoeba).